The chain runs to 348 residues: MTSGKNGLTYADAGVDIDAGNELVDRIKPAAKRTNRPGVMSGLGGFGALFDLKAAGYEDPILVGATDGVGTKLRIAIDTGLVDGVGIDLVAMCVNDLVCQGAEPLFFLDYFATGKLETDVAARIIEGIAEGCVRSGCALIGGETAEMPGMYPKGDFDLAGFAVGAMERGTALPAGVSEGDVLLGLASDGVHSNGYSLVRQIVKYSGLGWDGDNPFGEGKLGEALLTPTRLYVKQSLAAVRAGGVNALAHITGGGLTENLPRVLPDDLGADIDLGAWELPGVFKWMAQTGGIEESEMLKTFNCGIGMILVVKADRADALTEVLEGEGETVARLGTVTRGEGIRYTGALL.

The protein belongs to the AIR synthase family.

It localises to the cytoplasm. The enzyme catalyses 2-formamido-N(1)-(5-O-phospho-beta-D-ribosyl)acetamidine + ATP = 5-amino-1-(5-phospho-beta-D-ribosyl)imidazole + ADP + phosphate + H(+). Its pathway is purine metabolism; IMP biosynthesis via de novo pathway; 5-amino-1-(5-phospho-D-ribosyl)imidazole from N(2)-formyl-N(1)-(5-phospho-D-ribosyl)glycinamide: step 2/2. The polypeptide is Phosphoribosylformylglycinamidine cyclo-ligase (Ruegeria sp. (strain TM1040) (Silicibacter sp.)).